Here is a 478-residue protein sequence, read N- to C-terminus: NAD-dependent malic enzyme (478 aa).

One can recognise an ACT domain in the interval 12-86; it reads TIRLQFEKDI…GVKIVNVSDR (75 aa). The active-site Proton donor is Y114. The Proton acceptor role is filled by K169. A divalent metal cation contacts are provided by E211, D212, and D237. NAD(+) is bound by residues 270-273, N363, and N393; that span reads IGAA.

The protein belongs to the malic enzymes family. As to quaternary structure, homotetramer. Requires Mg(2+) as cofactor. Mn(2+) serves as cofactor.

The catalysed reaction is (S)-malate + NAD(+) = pyruvate + CO2 + NADH. It carries out the reaction oxaloacetate + H(+) = pyruvate + CO2. The activity is enhanced 5-7 times by ammonium and potassium. In addition to the NAD-dependent oxidative decarboxylation of L-malate, the enzyme catalyzes the decarboxylation of oxaloacetate. This chain is NAD-dependent malic enzyme, found in Geobacillus stearothermophilus (Bacillus stearothermophilus).